The primary structure comprises 174 residues: Gamma-crystallin D (174 aa).

2 consecutive Beta/gamma crystallin 'Greek key' domains span residues 2 to 40 (GKIT…RVDS) and 41 to 83 (GCWM…RIIP). Residues 84–87 (YSGS) are connecting peptide. 2 consecutive Beta/gamma crystallin 'Greek key' domains span residues 88–128 (HKMR…NVLD) and 129–171 (GCWI…RRVI).

It belongs to the beta/gamma-crystallin family. In terms of assembly, monomer.

Functionally, crystallins are the dominant structural components of the vertebrate eye lens. The protein is Gamma-crystallin D (CRYGD) of Macropus fuliginosus (Western gray kangaroo).